Here is a 490-residue protein sequence, read N- to C-terminus: Acetyl-coenzyme A carboxylase carboxyl transferase subunit beta, chloroplastic (490 aa).

The 270-residue stretch at 221 to 490 folds into the CoA carboxyltransferase N-terminal domain; the sequence is LWVQCENCYG…PLNQKSSKIK (270 aa). Cysteine 225, cysteine 228, cysteine 244, and cysteine 247 together coordinate Zn(2+). Residues 225–247 form a C4-type zinc finger; sequence CENCYGLNYKKFLKSKMNICEQC.

Belongs to the AccD/PCCB family. Acetyl-CoA carboxylase is a heterohexamer composed of biotin carboxyl carrier protein, biotin carboxylase and 2 subunits each of ACCase subunit alpha and ACCase plastid-coded subunit beta (accD). Zn(2+) is required as a cofactor. In terms of tissue distribution, expressed in leaves, ripening and mature fruit.

It localises to the plastid. It is found in the chloroplast stroma. Its subcellular location is the chromoplast stroma. The catalysed reaction is N(6)-carboxybiotinyl-L-lysyl-[protein] + acetyl-CoA = N(6)-biotinyl-L-lysyl-[protein] + malonyl-CoA. It participates in lipid metabolism; malonyl-CoA biosynthesis; malonyl-CoA from acetyl-CoA: step 1/1. In terms of biological role, component of the acetyl coenzyme A carboxylase (ACC) complex. Biotin carboxylase (BC) catalyzes the carboxylation of biotin on its carrier protein (BCCP) and then the CO(2) group is transferred by the transcarboxylase to acetyl-CoA to form malonyl-CoA. Is up-regulated upon chromoplast differentiation, presumably for fatty acid biosynthesis. The chain is Acetyl-coenzyme A carboxylase carboxyl transferase subunit beta, chloroplastic from Solanum lycopersicum (Tomato).